A 124-amino-acid chain; its full sequence is Fluoride-specific ion channel FluC (124 aa).

The next 4 helical transmembrane spans lie at 2–22, 35–55, 71–91, and 100–120; these read LNIA…RWLI, TGTL…IAWF, TGFC…VALF, and LGTM…AFWL. Glycine 75 and threonine 78 together coordinate Na(+).

This sequence belongs to the fluoride channel Fluc/FEX (TC 1.A.43) family.

The protein resides in the cell inner membrane. The catalysed reaction is fluoride(in) = fluoride(out). With respect to regulation, na(+) is not transported, but it plays an essential structural role and its presence is essential for fluoride channel function. Its function is as follows. Fluoride-specific ion channel. Important for reducing fluoride concentration in the cell, thus reducing its toxicity. This chain is Fluoride-specific ion channel FluC, found in Proteus mirabilis (strain HI4320).